Reading from the N-terminus, the 506-residue chain is ATP synthase subunit alpha (506 aa).

169 to 176 contributes to the ATP binding site; that stretch reads GDRQTGKT.

The protein belongs to the ATPase alpha/beta chains family. F-type ATPases have 2 components, CF(1) - the catalytic core - and CF(0) - the membrane proton channel. CF(1) has five subunits: alpha(3), beta(3), gamma(1), delta(1), epsilon(1). CF(0) has three main subunits: a(1), b(2) and c(9-12). The alpha and beta chains form an alternating ring which encloses part of the gamma chain. CF(1) is attached to CF(0) by a central stalk formed by the gamma and epsilon chains, while a peripheral stalk is formed by the delta and b chains.

It is found in the cell membrane. The enzyme catalyses ATP + H2O + 4 H(+)(in) = ADP + phosphate + 5 H(+)(out). Functionally, produces ATP from ADP in the presence of a proton gradient across the membrane. The alpha chain is a regulatory subunit. The chain is ATP synthase subunit alpha from Lawsonia intracellularis (strain PHE/MN1-00).